We begin with the raw amino-acid sequence, 177 residues long: Adenine phosphoribosyltransferase (177 aa).

Belongs to the purine/pyrimidine phosphoribosyltransferase family. As to quaternary structure, homodimer.

The protein resides in the cytoplasm. It carries out the reaction AMP + diphosphate = 5-phospho-alpha-D-ribose 1-diphosphate + adenine. The protein operates within purine metabolism; AMP biosynthesis via salvage pathway; AMP from adenine: step 1/1. Catalyzes a salvage reaction resulting in the formation of AMP, that is energically less costly than de novo synthesis. The chain is Adenine phosphoribosyltransferase from Pelodictyon phaeoclathratiforme (strain DSM 5477 / BU-1).